A 134-amino-acid polypeptide reads, in one-letter code: Large ribosomal subunit protein eL14y (134 aa).

This sequence belongs to the eukaryotic ribosomal protein eL14 family.

In Arabidopsis thaliana (Mouse-ear cress), this protein is Large ribosomal subunit protein eL14y (RPL14B).